Here is a 435-residue protein sequence, read N- to C-terminus: Angio-associated migratory cell protein (435 aa).

The tract at residues 1 to 65 is disordered; that stretch reads MESESESGAA…EEEEEGNEEG (65 aa). Ser20 carries the post-translational modification Phosphoserine. Acidic residues predominate over residues 39 to 63; sequence DPDDLAQEMEDVDFEEEEEEEEGNE. WD repeat units follow at residues 90–130, 133–172, 174–213, 215–255, 259–300, 316–355, 357–396, and 399–434; these read LHSA…LLFE, GHKD…EVWS, EAGD…KTFQ, PNCP…HVLK, GHQG…GVFR, SESN…LRHQ, QHQS…LLTD, and GHTA…QRPD.

The protein localises to the cell membrane. It localises to the cytoplasm. In terms of biological role, plays a role in angiogenesis and cell migration. In smooth muscle cell migration, may act through the RhoA pathway. This is Angio-associated migratory cell protein (AAMP) from Canis lupus familiaris (Dog).